Here is a 290-residue protein sequence, read N- to C-terminus: 33 kDa chaperonin (290 aa).

2 disulfide bridges follow: cysteine 234-cysteine 236 and cysteine 267-cysteine 270.

Belongs to the HSP33 family. Under oxidizing conditions two disulfide bonds are formed involving the reactive cysteines. Under reducing conditions zinc is bound to the reactive cysteines and the protein is inactive.

Its subcellular location is the cytoplasm. In terms of biological role, redox regulated molecular chaperone. Protects both thermally unfolding and oxidatively damaged proteins from irreversible aggregation. Plays an important role in the bacterial defense system toward oxidative stress. This Colwellia psychrerythraea (strain 34H / ATCC BAA-681) (Vibrio psychroerythus) protein is 33 kDa chaperonin.